Here is a 434-residue protein sequence, read N- to C-terminus: Trigger factor (434 aa).

In terms of domain architecture, PPIase FKBP-type spans 160 to 245; that stretch reads GDKVKMNFVG…LTEVLAANLP (86 aa).

It belongs to the FKBP-type PPIase family. Tig subfamily.

The protein resides in the cytoplasm. It carries out the reaction [protein]-peptidylproline (omega=180) = [protein]-peptidylproline (omega=0). Involved in protein export. Acts as a chaperone by maintaining the newly synthesized protein in an open conformation. Functions as a peptidyl-prolyl cis-trans isomerase. The sequence is that of Trigger factor from Shewanella sp. (strain MR-4).